The chain runs to 655 residues: Alpha-L-iduronidase (655 aa).

A signal peptide spans 1–25 (MRPPGPRAPGLALLAALLAAPRALA). Alpha-D-mannopyranose contacts are provided by Pro53, Leu55, and His57. Residue His90 participates in alpha-L-iduronate binding. Asn109 is a glycosylation site (N-linked (GlcNAc...) asparagine). 2 residues coordinate alpha-L-iduronate: Asn180 and Glu181. Glu181 serves as the catalytic Proton donor. Residues Asn189 and Asn242 are each glycosylated (N-linked (GlcNAc...) asparagine). Residues Lys263, Glu298, and Gly304 each contribute to the alpha-L-iduronate site. Glu298 (nucleophile) is an active-site residue. Position 305 (Trp305) interacts with alpha-D-mannopyranose. Asn335 is a glycosylation site (N-linked (GlcNAc...) asparagine). Positions 348 and 362 each coordinate alpha-L-iduronate. Asn371 and Asn414 each carry an N-linked (GlcNAc...) asparagine glycan. A disulfide bond links Cys540 and Cys576.

The protein belongs to the glycosyl hydrolase 39 family. As to quaternary structure, monomer. Post-translationally, a smaller 63 kDa protein probably arises from IDUA protein by proteolytic cleavage. N-glycosylation contributes to substrate binding and is required for full enzymatic activity. In terms of tissue distribution, detected in testis (at protein level). Expressed ubiquitously.

It is found in the lysosome. The enzyme catalyses Hydrolysis of unsulfated alpha-L-iduronosidic linkages in dermatan sulfate.. The sequence is that of Alpha-L-iduronidase (IDUA) from Canis lupus familiaris (Dog).